The chain runs to 611 residues: Glutamine--fructose-6-phosphate aminotransferase [isomerizing] (611 aa).

C2 functions as the Nucleophile; for GATase activity in the catalytic mechanism. The Glutamine amidotransferase type-2 domain maps to 2-219 (CGIVGGVSKT…DGDVAMLQRQ (218 aa)). 2 consecutive SIS domains span residues 287 to 427 (AAAM…APGA) and 460 to 601 (WAAR…VDRP). K606 acts as the For Fru-6P isomerization activity in catalysis.

In terms of assembly, homodimer.

Its subcellular location is the cytoplasm. The enzyme catalyses D-fructose 6-phosphate + L-glutamine = D-glucosamine 6-phosphate + L-glutamate. Catalyzes the first step in hexosamine metabolism, converting fructose-6P into glucosamine-6P using glutamine as a nitrogen source. This is Glutamine--fructose-6-phosphate aminotransferase [isomerizing] from Acidithiobacillus ferridurans.